Consider the following 274-residue polypeptide: Protein CIMAP1C (274 aa).

Positions 1–27 (MKLPKGTRSSVYFAQHPEKEPLPSRQE) are disordered. Basic and acidic residues predominate over residues 16–27 (HPEKEPLPSRQE). 2 STPGR repeats span residues 199–224 (PGPT…MAKR) and 235–260 (PGPG…MGIK).

The protein belongs to the CIMAP family.

The chain is Protein CIMAP1C from Homo sapiens (Human).